The chain runs to 509 residues: Sulfoacetate--CoA ligase (509 aa).

The interval 320 to 340 is disordered; that stretch reads AFSNPLDPGQRRIGSIGRPSG.

It belongs to the ATP-dependent AMP-binding enzyme family.

The protein localises to the cytoplasm. It catalyses the reaction sulfoacetate + ATP + CoA = sulfoacetyl-CoA + AMP + diphosphate. Functionally, involved in the degradation of sulfoacetate, a widespread natural product. Catalyzes the CoA- and ATP-dependent conversion of sulfoacetate to sulfoacetyl-CoA and AMP. The chain is Sulfoacetate--CoA ligase from Cupriavidus necator (strain ATCC 17699 / DSM 428 / KCTC 22496 / NCIMB 10442 / H16 / Stanier 337) (Ralstonia eutropha).